Here is a 440-residue protein sequence, read N- to C-terminus: Chromosome partition protein MukF (440 aa).

Residues 208–236 are leucine-zipper; the sequence is LSETSGTLRELQDTLEAAGDKLQANLLRI.

This sequence belongs to the MukF family. Interacts, and probably forms a ternary complex, with MukE and MukB via its C-terminal region. The complex formation is stimulated by calcium or magnesium. It is required for an interaction between MukE and MukB.

The protein resides in the cytoplasm. It is found in the nucleoid. Involved in chromosome condensation, segregation and cell cycle progression. May participate in facilitating chromosome segregation by condensation DNA from both sides of a centrally located replisome during cell division. Not required for mini-F plasmid partitioning. Probably acts via its interaction with MukB and MukE. Overexpression results in anucleate cells. It has a calcium binding activity. The polypeptide is Chromosome partition protein MukF (Escherichia coli O127:H6 (strain E2348/69 / EPEC)).